A 363-amino-acid chain; its full sequence is MIIDTTKLQAINSFYRSESLKEVYGLVWLLIPIFILVLGIVIGVLVIVWLERQISAGVQQRIGPEYAGPLGILQALADGTKLLFKEDLLPSRGDIYLFSIGPSIAVIAILLSYLVIPFGYHLVLADLSIGVFLWIAISSIAPIGLLMSGYGSNNKYSFLGGLRAAAQSISYEIPLTPCVLSISLLSNSSSTVDIVEAQAKYGFWGWNLWRQPIGFTVFFISSLAECERLPFDLPEAEEELVAGYQTEYSGIKFGLFYVASYLNLLVSSLFVTVLYLGGWNLSIPHILIPELFGINEMGGVFGMTIGIFITLAKAYLFLFISITTRWTLPRMRMDQLLNLGWKFLLPISLGNLLLTTSFQLFSL.

The next 6 membrane-spanning stretches (helical) occupy residues 27 to 47 (VWLL…VLVI), 104 to 124 (IAVI…HLVL), 127 to 147 (LSIG…GLLM), 248 to 268 (YSGI…LVSS), 300 to 320 (VFGM…FLFI), and 343 to 363 (FLLP…LFSL).

Belongs to the complex I subunit 1 family. In terms of assembly, NDH is composed of at least 16 different subunits, 5 of which are encoded in the nucleus.

The protein resides in the plastid. It is found in the chloroplast thylakoid membrane. It catalyses the reaction a plastoquinone + NADH + (n+1) H(+)(in) = a plastoquinol + NAD(+) + n H(+)(out). The catalysed reaction is a plastoquinone + NADPH + (n+1) H(+)(in) = a plastoquinol + NADP(+) + n H(+)(out). Its function is as follows. NDH shuttles electrons from NAD(P)H:plastoquinone, via FMN and iron-sulfur (Fe-S) centers, to quinones in the photosynthetic chain and possibly in a chloroplast respiratory chain. The immediate electron acceptor for the enzyme in this species is believed to be plastoquinone. Couples the redox reaction to proton translocation, and thus conserves the redox energy in a proton gradient. The polypeptide is NAD(P)H-quinone oxidoreductase subunit 1, chloroplastic (Ranunculus macranthus (Large buttercup)).